We begin with the raw amino-acid sequence, 78 residues long: U7-lycotoxin-Ls1e (78 aa).

The N-terminal stretch at 1-22 is a signal peptide; it reads MKLIIFTGLALLLIVSLIDVEA. Positions 23–26 are excised as a propeptide; sequence QNEG.

This sequence belongs to the neurotoxin 19 (CSTX) family. 07 (U7-Lctx) subfamily. Post-translationally, contains 4 disulfide bonds. As to expression, expressed by the venom gland.

It localises to the secreted. The chain is U7-lycotoxin-Ls1e from Lycosa singoriensis (Wolf spider).